The following is a 234-amino-acid chain: Flagellar L-ring protein (234 aa).

The first 15 residues, 1 to 15 (MRYAVICMLLLAASG), serve as a signal peptide directing secretion. Cys-16 carries N-palmitoyl cysteine lipidation. A lipid anchor (S-diacylglycerol cysteine) is attached at Cys-16.

The protein belongs to the FlgH family. As to quaternary structure, the basal body constitutes a major portion of the flagellar organelle and consists of four rings (L,P,S, and M) mounted on a central rod.

It is found in the cell outer membrane. It localises to the bacterial flagellum basal body. Functionally, assembles around the rod to form the L-ring and probably protects the motor/basal body from shearing forces during rotation. The chain is Flagellar L-ring protein from Oleidesulfovibrio alaskensis (strain ATCC BAA-1058 / DSM 17464 / G20) (Desulfovibrio alaskensis).